A 177-amino-acid chain; its full sequence is Nucleoside triphosphate/diphosphate phosphatase (177 aa).

Arginine 23 serves as the catalytic Proton donor. Asparagine 87, aspartate 103, aspartate 105, aspartate 107, aspartate 120, and glutamate 123 together coordinate Mg(2+).

It belongs to the Ntdp family. The cofactor is Mg(2+).

It carries out the reaction a ribonucleoside 5'-triphosphate + H2O = a ribonucleoside 5'-diphosphate + phosphate + H(+). The enzyme catalyses a ribonucleoside 5'-diphosphate + H2O = a ribonucleoside 5'-phosphate + phosphate + H(+). Has nucleoside phosphatase activity towards nucleoside triphosphates and nucleoside diphosphates. The polypeptide is Nucleoside triphosphate/diphosphate phosphatase (Streptococcus equi subsp. zooepidemicus (strain MGCS10565)).